The primary structure comprises 312 residues: Porphobilinogen deaminase (312 aa).

C241 is modified (S-(dipyrrolylmethanemethyl)cysteine).

The protein belongs to the HMBS family. Monomer. It depends on dipyrromethane as a cofactor.

It catalyses the reaction 4 porphobilinogen + H2O = hydroxymethylbilane + 4 NH4(+). The protein operates within porphyrin-containing compound metabolism; protoporphyrin-IX biosynthesis; coproporphyrinogen-III from 5-aminolevulinate: step 2/4. In terms of biological role, tetrapolymerization of the monopyrrole PBG into the hydroxymethylbilane pre-uroporphyrinogen in several discrete steps. This chain is Porphobilinogen deaminase, found in Trichlorobacter lovleyi (strain ATCC BAA-1151 / DSM 17278 / SZ) (Geobacter lovleyi).